Consider the following 150-residue polypeptide: FAD synthase (150 aa).

ATP contacts are provided by residues V16–F17, H21–H24, and D102.

This sequence belongs to the archaeal FAD synthase family. Homodimer. Requires a divalent metal cation as cofactor.

It carries out the reaction FMN + ATP + H(+) = FAD + diphosphate. It functions in the pathway cofactor biosynthesis; FAD biosynthesis; FAD from FMN: step 1/1. Catalyzes the transfer of the AMP portion of ATP to flavin mononucleotide (FMN) to produce flavin adenine dinucleotide (FAD) coenzyme. This is FAD synthase from Thermococcus onnurineus (strain NA1).